The primary structure comprises 472 residues: Threonine synthase-like 2 (472 aa).

At Lys113 the chain carries N6-(pyridoxal phosphate)lysine.

The protein belongs to the threonine synthase family. Requires pyridoxal 5'-phosphate as cofactor.

Its function is as follows. Acts as a catabolic phospho-lyase on both gamma- and beta-phosphorylated substrates. Degrades O-phospho-threonine (PThr) to alpha-ketobutyrate, ammonia and phosphate. The protein is Threonine synthase-like 2 (thnsl2) of Xenopus laevis (African clawed frog).